Consider the following 354-residue polypeptide: Homeobox protein Nkx-2.4 (354 aa).

The homeobox DNA-binding region spans 188–247; that stretch reads RRKRRVLFSQAQVYELERRFKQQKYLSAPEREHLASMIHLTPTQVKIWFQNHRYKMKRQA. Positions 245 to 329 are disordered; that stretch reads RQAKDKAAQQ…PALHGPGGGL (85 aa). The segment covering 262–272 has biased composition (pro residues); that stretch reads GPPPPPPPPSP. Residues 290 to 304 are compositionally biased toward low complexity; the sequence is GAGTPTPGQGGQQPQ.

This sequence belongs to the NK-2 homeobox family. In the embryo it is detected in the posterior hypothalamus and later in the head. In the adult it is detected only in testis.

It is found in the nucleus. Its function is as follows. Probable transcription factor. This Mus musculus (Mouse) protein is Homeobox protein Nkx-2.4 (Nkx2-4).